The sequence spans 230 residues: Sugar fermentation stimulation protein homolog (230 aa).

Belongs to the SfsA family.

In Ruegeria pomeroyi (strain ATCC 700808 / DSM 15171 / DSS-3) (Silicibacter pomeroyi), this protein is Sugar fermentation stimulation protein homolog.